We begin with the raw amino-acid sequence, 462 residues long: CCA-adding enzyme (462 aa).

The ATP site is built by Ser54 and Arg57. 2 residues coordinate CTP: Ser54 and Arg57. Positions 66, 68, and 117 each coordinate Mg(2+). ATP contacts are provided by His140, Lys160, and Tyr169. His140, Lys160, and Tyr169 together coordinate CTP.

It belongs to the tRNA nucleotidyltransferase/poly(A) polymerase family. Archaeal CCA-adding enzyme subfamily. Homodimer. The cofactor is Mg(2+).

The catalysed reaction is a tRNA precursor + 2 CTP + ATP = a tRNA with a 3' CCA end + 3 diphosphate. It carries out the reaction a tRNA with a 3' CCA end + 2 CTP + ATP = a tRNA with a 3' CCACCA end + 3 diphosphate. Catalyzes the addition and repair of the essential 3'-terminal CCA sequence in tRNAs without using a nucleic acid template. Adds these three nucleotides in the order of C, C, and A to the tRNA nucleotide-73, using CTP and ATP as substrates and producing inorganic pyrophosphate. tRNA 3'-terminal CCA addition is required both for tRNA processing and repair. Also involved in tRNA surveillance by mediating tandem CCA addition to generate a CCACCA at the 3' terminus of unstable tRNAs. While stable tRNAs receive only 3'-terminal CCA, unstable tRNAs are marked with CCACCA and rapidly degraded. In Halorubrum lacusprofundi (strain ATCC 49239 / DSM 5036 / JCM 8891 / ACAM 34), this protein is CCA-adding enzyme.